The chain runs to 600 residues: Elongation factor 4 (600 aa).

Positions 4-186 (SKIRNFSIIA…EIVKKIPAPQ (183 aa)) constitute a tr-type G domain. GTP is bound by residues 16-21 (DHGKST) and 133-136 (NKID).

The protein belongs to the TRAFAC class translation factor GTPase superfamily. Classic translation factor GTPase family. LepA subfamily.

The protein localises to the cell inner membrane. The enzyme catalyses GTP + H2O = GDP + phosphate + H(+). Its function is as follows. Required for accurate and efficient protein synthesis under certain stress conditions. May act as a fidelity factor of the translation reaction, by catalyzing a one-codon backward translocation of tRNAs on improperly translocated ribosomes. Back-translocation proceeds from a post-translocation (POST) complex to a pre-translocation (PRE) complex, thus giving elongation factor G a second chance to translocate the tRNAs correctly. Binds to ribosomes in a GTP-dependent manner. The sequence is that of Elongation factor 4 from Trichlorobacter lovleyi (strain ATCC BAA-1151 / DSM 17278 / SZ) (Geobacter lovleyi).